The chain runs to 238 residues: Ciliary microtubule associated protein 1B (238 aa).

An STPGR repeat occupies 182–207; that stretch reads PGPCAYHVVNPMIYKTRAPQFTMLGR. The segment at 206–238 is disordered; sequence GRTLPPRENTKKPGPASYSVDKVVWSRGSRGRG.

This sequence belongs to the CIMAP family.

The protein localises to the cell projection. Its subcellular location is the cilium. It is found in the flagellum. This chain is Ciliary microtubule associated protein 1B (Cimap1b), found in Mus musculus (Mouse).